Consider the following 424-residue polypeptide: E3 ubiquitin-protein ligase RNF26 (424 aa).

5 helical membrane passes run 24–44 (LNFL…AFIY), 60–80 (GFLL…FGGL), 157–177 (ISTQ…TGPL), 183–203 (VVAA…ILLW), and 224–244 (VVFH…ILIV). Residues 371–413 (CVICQDQSKTVLLLPCRHLCLCQACTEILMRHPVYHRNCPLCR) form an RING-type zinc finger.

Interacts with INCA1. Interacts with TMEM43, ENDOD1, TMEM33 and TMED1 to form a complex capable of modulating innate immune signaling through the cGAS-STING pathway. Interacts with UBE2J1; this interaction is important for SQSTM1 ubiquitination.

The protein resides in the endoplasmic reticulum membrane. The enzyme catalyses S-ubiquitinyl-[E2 ubiquitin-conjugating enzyme]-L-cysteine + [acceptor protein]-L-lysine = [E2 ubiquitin-conjugating enzyme]-L-cysteine + N(6)-ubiquitinyl-[acceptor protein]-L-lysine.. The protein operates within protein modification; protein ubiquitination. Functionally, E3 ubiquitin-protein ligase that plays a key role in endosome organization by retaining vesicles in the perinuclear cloud. Acts as a platform for perinuclear positioning of the endosomal system by mediating ubiquitination of SQSTM1 through interaction with the ubiquitin conjugating enzyme UBE2J1. Ubiquitinated SQSTM1 attracts specific vesicle-associated adapters, forming a molecular bridge that restrains cognate vesicles in the perinuclear region and organizes the endosomal pathway for efficient cargo transport. Also acts as a regulator of type I interferon production in response to viral infection by mediating the formation of 'Lys-11'-linked polyubiquitin chains on TMEM173/STING, leading to stabilize TMEM173/STING. Also required to limit type I interferon response by promoting autophagic degradation of IRF3. The polypeptide is E3 ubiquitin-protein ligase RNF26 (Mus musculus (Mouse)).